A 599-amino-acid polypeptide reads, in one-letter code: Elongation factor 4 (599 aa).

One can recognise a tr-type G domain in the interval 2–184 (KHIRNFSIIA…RLVRDIPAPE (183 aa)). GTP contacts are provided by residues 14 to 19 (DHGKST) and 131 to 134 (NKID).

Belongs to the TRAFAC class translation factor GTPase superfamily. Classic translation factor GTPase family. LepA subfamily.

The protein localises to the cell inner membrane. The catalysed reaction is GTP + H2O = GDP + phosphate + H(+). Its function is as follows. Required for accurate and efficient protein synthesis under certain stress conditions. May act as a fidelity factor of the translation reaction, by catalyzing a one-codon backward translocation of tRNAs on improperly translocated ribosomes. Back-translocation proceeds from a post-translocation (POST) complex to a pre-translocation (PRE) complex, thus giving elongation factor G a second chance to translocate the tRNAs correctly. Binds to ribosomes in a GTP-dependent manner. In Yersinia pestis bv. Antiqua (strain Antiqua), this protein is Elongation factor 4.